A 525-amino-acid chain; its full sequence is Neuropilin and tolloid-like protein 2 (525 aa).

The first 22 residues, 1 to 22 (MALEQLCAVLKVLLITVLVVEG), serve as a signal peptide directing secretion. Residues 23 to 347 (IAVAQKTQDG…GLFEQITKTH (325 aa)) lie on the Extracellular side of the membrane. Intrachain disulfides connect cysteine 45–cysteine 72, cysteine 100–cysteine 122, cysteine 177–cysteine 207, cysteine 234–cysteine 256, cysteine 297–cysteine 309, cysteine 304–cysteine 322, and cysteine 316–cysteine 331. 2 consecutive CUB domains span residues 45 to 159 (CGIW…YSFI) and 177 to 292 (CQFE…FTSF). Residues 296 to 332 (PCTSSTFFCHSNMCINNSLVCNGVQNCAYPWDENHCK) form the LDL-receptor class A domain. Asparagine 311 is a glycosylation site (N-linked (GlcNAc...) asparagine). The chain crosses the membrane as a helical span at residues 348–368 (GTIIGITSGIVLVLLIISILV). The Cytoplasmic segment spans residues 369–525 (QVKQPRKKVM…SAQASISIDF (157 aa)). Serine 409 bears the Phosphoserine mark.

In terms of assembly, interacts with GRIK2 and GRIK3, but neither with AMPA-nor with NMDA-sensitive glutamate receptors. Post-translationally, N-glycosylated. In terms of tissue distribution, expressed in brain tissues, including cerebellar granule cells (at protein level).

The protein resides in the cell membrane. Accessory subunit of neuronal kainate-sensitive glutamate receptors, GRIK2 and GRIK3. Increases kainate-receptor channel activity, slowing the decay kinetics of the receptors, without affecting their expression at the cell surface, and increasing the open probability of the receptor channels. Modulates the agonist sensitivity of kainate receptors. Slows the decay of kainate receptor-mediated excitatory postsynaptic currents (EPSCs), thus directly influencing synaptic transmission. In Mus musculus (Mouse), this protein is Neuropilin and tolloid-like protein 2 (Neto2).